A 406-amino-acid chain; its full sequence is Outer membrane protein assembly factor BamB (406 aa).

A signal peptide spans 1–23 (MMKQVDMYKRVALIALMGMSLAG). Cys-24 carries N-palmitoyl cysteine lipidation. Cys-24 carries the S-diacylglycerol cysteine lipid modification.

The protein belongs to the BamB family. Part of the Bam complex.

The protein localises to the cell outer membrane. Its function is as follows. Part of the outer membrane protein assembly complex, which is involved in assembly and insertion of beta-barrel proteins into the outer membrane. This is Outer membrane protein assembly factor BamB from Xanthomonas campestris pv. campestris (strain ATCC 33913 / DSM 3586 / NCPPB 528 / LMG 568 / P 25).